The sequence spans 360 residues: Heat-inducible transcription repressor HrcA (360 aa).

Belongs to the HrcA family.

In terms of biological role, negative regulator of class I heat shock genes (grpE-dnaK-dnaJ and groELS operons). Prevents heat-shock induction of these operons. This chain is Heat-inducible transcription repressor HrcA, found in Mesorhizobium japonicum (strain LMG 29417 / CECT 9101 / MAFF 303099) (Mesorhizobium loti (strain MAFF 303099)).